The primary structure comprises 188 residues: Molybdopterin synthase catalytic subunit (188 aa).

Polar residues predominate over residues Met-1–Thr-10. Residues Met-1–Thr-21 are disordered. Substrate is bound by residues His-123–Arg-124, Lys-139, and Lys-146–Glu-148.

The protein belongs to the MoaE family. MOCS2B subfamily. In terms of assembly, heterotetramer; composed of 2 small (MOCS2A) and 2 large (MOCS2B) subunits.

It localises to the cytoplasm. It catalyses the reaction 2 [molybdopterin-synthase sulfur-carrier protein]-C-terminal-Gly-aminoethanethioate + cyclic pyranopterin phosphate + H2O = molybdopterin + 2 [molybdopterin-synthase sulfur-carrier protein]-C-terminal Gly-Gly + 2 H(+). It participates in cofactor biosynthesis; molybdopterin biosynthesis. Functionally, catalytic subunit of the molybdopterin synthase complex, a complex that catalyzes the conversion of precursor Z into molybdopterin. Acts by mediating the incorporation of 2 sulfur atoms from thiocarboxylated MOCS2A into precursor Z to generate a dithiolene group. The chain is Molybdopterin synthase catalytic subunit from Phaeosphaeria nodorum (strain SN15 / ATCC MYA-4574 / FGSC 10173) (Glume blotch fungus).